The sequence spans 529 residues: Neuronal acetylcholine receptor subunit alpha-2 (529 aa).

An N-terminal signal peptide occupies residues 1–26 (MGPSCPVFLSFTKLSLWWLLLTPAGG). The interval 27 to 56 (EEAKRPPPRAPGDPLSSPSPTALPQGGSHT) is disordered. The Extracellular segment spans residues 27–264 (EEAKRPPPRA…VTYAFVIRRL (238 aa)). Residues asparagine 79 and asparagine 129 are each glycosylated (N-linked (GlcNAc...) asparagine). An intrachain disulfide couples cysteine 183 to cysteine 197. Residue asparagine 235 is glycosylated (N-linked (GlcNAc...) asparagine). A disulfide bond links cysteine 247 and cysteine 248. 3 helical membrane passes run 265-289 (PLFYTINLIIPCLLISCLTVLVFYL), 297-315 (ITLCISVLLSLTVFLLLIT), and 331-352 (YLLFTMIFVTLSIVITVFVLNV). Residues 353-502 (HHRSPSTHTM…WKYVAMVIDR (150 aa)) lie on the Cytoplasmic side of the membrane. The chain crosses the membrane as a helical span at residues 503–521 (IFLWLFIIVCFLGTIGLFL).

It belongs to the ligand-gated ion channel (TC 1.A.9) family. Acetylcholine receptor (TC 1.A.9.1) subfamily. Alpha-2/CHRNA2 sub-subfamily. Neuronal AChR is composed of two different types of subunits: alpha and non-alpha (beta). CHRNA2/alpha-2 subunit can be combined to CHRNB2/beta-2 or CHRNB4/beta-4 to give rise to functional receptors. Both CHRNA2:CHRNB2 and CHRNA2:CHRNB4 nAChR complexes are heteropentamers with two subtypes: LS (low agonist sensitivity) with a (CHRNA2)3:(CHRNB2/4)2 and HS (high agonist sensitivity) with a (CHRNA2)2:(CHRNB2/4)3 stoichiometries; the subtypes differ in their subunit binding interfaces which are involved in ligand binding.

The protein localises to the synaptic cell membrane. The protein resides in the cell membrane. It carries out the reaction Ca(2+)(in) = Ca(2+)(out). The catalysed reaction is K(+)(in) = K(+)(out). The enzyme catalyses Na(+)(in) = Na(+)(out). Its function is as follows. Component of neuronal acetylcholine receptors (nAChRs) that function as pentameric, ligand-gated cation channels with high calcium permeability among other activities. nAChRs are excitatory neurotrasnmitter receptors formed by a collection of nAChR subunits known to mediate synaptic transmission in the nervous system and the neuromuscular junction. Each nAchR subunit confers differential attributes to channel properties, including activation, deactivation and desensitization kinetics, pH sensitivity, cation permeability, and binding to allosteric modulators. CHRNA2 forms heteropentameric neuronal acetylcholine receptors with CHRNB2 and CHRNB4 and plays a role in nicotine dependence. The polypeptide is Neuronal acetylcholine receptor subunit alpha-2 (Homo sapiens (Human)).